The following is a 93-amino-acid chain: MSRSLKKGPFADAHLLNKIEAQADSEKKQVIKTWSRRSTIFPSFIGYTIAVYDGRKHVPVFISDDMVGHKLGEFVPTRTFHGHGNDDKKTKAR.

This sequence belongs to the universal ribosomal protein uS19 family.

Its function is as follows. Protein S19 forms a complex with S13 that binds strongly to the 16S ribosomal RNA. The chain is Small ribosomal subunit protein uS19 from Latilactobacillus sakei subsp. sakei (strain 23K) (Lactobacillus sakei subsp. sakei).